The chain runs to 557 residues: Glucose-6-phosphate isomerase (557 aa).

The active-site Proton donor is Glu361. Catalysis depends on residues His392 and Lys520.

This sequence belongs to the GPI family.

The protein localises to the cytoplasm. The enzyme catalyses alpha-D-glucose 6-phosphate = beta-D-fructose 6-phosphate. It functions in the pathway carbohydrate biosynthesis; gluconeogenesis. Its pathway is carbohydrate degradation; glycolysis; D-glyceraldehyde 3-phosphate and glycerone phosphate from D-glucose: step 2/4. Its function is as follows. Catalyzes the reversible isomerization of glucose-6-phosphate to fructose-6-phosphate. The sequence is that of Glucose-6-phosphate isomerase from Acinetobacter baylyi (strain ATCC 33305 / BD413 / ADP1).